The primary structure comprises 225 residues: MNSIEFPLLDRTTQNSVISTTLNDLSNWSRLSSLWPLLYGTSCCFIEFASLIGSRFDFDRYGLVPRSSPRQADLILTAGTVTMKMAPSLVRLYEQMPEPKYVIAMGACTITGGMFSTDSYSTVRGVDKLIPVDVYLPGCPPKPEAVIDAITKLRKKISREIYEDRIRSQQGNRCFTTNHKFLFVRSTHTGNYDQELLYQPSSTSEIPTETFFKYKSSVSSRELVN.

[4Fe-4S] cluster contacts are provided by cysteine 43, cysteine 44, cysteine 108, and cysteine 139.

This sequence belongs to the complex I 20 kDa subunit family. NDH is composed of at least 16 different subunits, 5 of which are encoded in the nucleus. Requires [4Fe-4S] cluster as cofactor.

The protein localises to the plastid. The protein resides in the chloroplast thylakoid membrane. The catalysed reaction is a plastoquinone + NADH + (n+1) H(+)(in) = a plastoquinol + NAD(+) + n H(+)(out). It carries out the reaction a plastoquinone + NADPH + (n+1) H(+)(in) = a plastoquinol + NADP(+) + n H(+)(out). Its function is as follows. NDH shuttles electrons from NAD(P)H:plastoquinone, via FMN and iron-sulfur (Fe-S) centers, to quinones in the photosynthetic chain and possibly in a chloroplast respiratory chain. The immediate electron acceptor for the enzyme in this species is believed to be plastoquinone. Couples the redox reaction to proton translocation, and thus conserves the redox energy in a proton gradient. In Carica papaya (Papaya), this protein is NAD(P)H-quinone oxidoreductase subunit K, chloroplastic.